Reading from the N-terminus, the 76-residue chain is Small ribosomal subunit protein bS18 (76 aa).

Belongs to the bacterial ribosomal protein bS18 family. Part of the 30S ribosomal subunit. Forms a tight heterodimer with protein bS6.

In terms of biological role, binds as a heterodimer with protein bS6 to the central domain of the 16S rRNA, where it helps stabilize the platform of the 30S subunit. In Azotobacter vinelandii (strain DJ / ATCC BAA-1303), this protein is Small ribosomal subunit protein bS18.